A 507-amino-acid chain; its full sequence is Archaeal-type glutamate synthase [NADPH] (507 aa).

4Fe-4S ferredoxin-type domains are found at residues 10–39 (FVVE…YDEN) and 41–70 (NRVY…VRRN). Residues Cys19, Cys22, Cys25, Cys29, Cys50, Cys53, Cys56, and Cys60 each coordinate [4Fe-4S] cluster.

It belongs to the glutamate synthase family. Requires FMN as cofactor.

It catalyses the reaction 2 L-glutamate + NADP(+) = L-glutamine + 2-oxoglutarate + NADPH + H(+). This is Archaeal-type glutamate synthase [NADPH] from Thermotoga neapolitana (strain ATCC 49049 / DSM 4359 / NBRC 107923 / NS-E).